We begin with the raw amino-acid sequence, 132 residues long: Large ribosomal subunit protein bL19 (132 aa).

This sequence belongs to the bacterial ribosomal protein bL19 family.

Functionally, this protein is located at the 30S-50S ribosomal subunit interface and may play a role in the structure and function of the aminoacyl-tRNA binding site. This is Large ribosomal subunit protein bL19 from Rhodospirillum centenum (strain ATCC 51521 / SW).